A 420-amino-acid polypeptide reads, in one-letter code: FAD-dependent monooxygenase ntnJ (420 aa).

Residues 12–31 (FRVIVVGAGIGGLSAAVALA) form a helical membrane-spanning segment. Residues E41 and A54 each coordinate FAD. Residue N124 is glycosylated (N-linked (GlcNAc...) asparagine). R187 is a catalytic residue. N264 carries N-linked (GlcNAc...) asparagine glycosylation. D302 and V315 together coordinate FAD.

The protein belongs to the paxM FAD-dependent monooxygenase family. Requires FAD as cofactor.

It is found in the membrane. It participates in secondary metabolite biosynthesis; terpenoid biosynthesis. In terms of biological role, FAD-dependent monooxygenase; part of the gene cluster that mediates the biosynthesis of the meroterpenoids nectripenoids A and B, as well as cochliquninone D and isocochliquninone E. The pathway probably begins with the HR-PKS ntnH that catalyzes two chain-extension steps to form a reduced triketide, which then primes the SAT domain in the NR-PKS ntnG to initiate three more cycles of extension to give a linear hexaketide corresponding to the polyketide part of nectripenoids. The FAD-dependent monooxygenase ntnJ then performs an oxidative decarboxylation at C11 of the ntnH/ntnG product, via an electrophilic aromatic hydroxylation with concomitant ipso-decarboxylation. The membrane-bound polyprenyl transferase ntnF then introduces a farnesyl group before the FAD-dependent monooxygenase ntnK functions as the first epoxidase on terminal C12'-C13' olefin, followed by a second epoxidation on C7'-C8' catalyzed by ntnA. The terpene cyclase/mutase ntnI then initiates the sequential tricyclic ring formation through protonation of the terminal epoxide and catalyzes the regioselective and stereoselective 6/6/6-tricyclic ring formation. The cytochrome P450 monooxygenase ntnM may then hydroxylate C1'. This is FAD-dependent monooxygenase ntnJ from Nectria sp.